The primary structure comprises 591 residues: MSSSSSSSPKEETYEEDREFESQAKRLKTEEGEIVYSAEESENRQEATPQAGSDSDSGGGDGGDGDGGSGGGGDGEEGEGGEEGDEGDGDEGGSGGDEGGSGGGPRSMPLSTEGGGSHHKVSVSPVVHVRGLCESVVEADLVEALEKFGTICYVMMMPFKRQALVEFENIDSAKECVTFAADVPVYIAGQQAFFNYSTSKRITRPGNTDDPSGGNKVLLLSIQNPLYPITVDVLYTVCNPVGKVQRIVIFKRNGIQAMVEFESVLCAQKAKAALNGADIYAGCCTLKIEYARPTRLNVIRNDNDSWDYTKPYLGRRDRGKGRQRQAILGDHPSSFRHDGYGSHGPLLPLPSRYRMGSRDTPELVAYPLPQASSSYMHGGSPSGSVVMVSGLHQLKMNCSRVFNLFCLYGNIEKVKFMKTIPGTALVEMGDEYAVERAVTHLNNVKLFGKRLNVCVSKQHSVVPSQIFELEDGTSSYKDFAMSKNNRFTSAGQASKNIIQPPSCVLHYYNVPLCVTEETFTKLCNDHEVLPFIKYKVFDAKASAKTLSGLLEWKCKTDAVEALTALNHYQIRVPNGSNPYTLKLCFSTSSHL.

The disordered stretch occupies residues 1 to 120 (MSSSSSSSPK…STEGGGSHHK (120 aa)). Residues 20-31 (FESQAKRLKTEE) are compositionally biased toward basic and acidic residues. Lys-28 is covalently cross-linked (Glycyl lysine isopeptide (Lys-Gly) (interchain with G-Cter in SUMO2)). Ser-37 bears the Phosphoserine mark. Thr-48 is subject to Phosphothreonine. Positions 57-73 (SGGGDGGDGDGGSGGGG) are enriched in gly residues. The segment covering 74 to 91 (DGEEGEGGEEGDEGDGDE) has biased composition (acidic residues). Residues 92-105 (GGSGGDEGGSGGGP) show a composition bias toward gly residues. Ser-107, Ser-117, and Ser-124 each carry phosphoserine. RRM domains are found at residues 125–199 (PVVH…YSTS), 215–293 (NKVL…YARP), and 384–458 (SVVM…VSKQ). Lys-540 is covalently cross-linked (Glycyl lysine isopeptide (Lys-Gly) (interchain with G-Cter in SUMO2)).

Interacts with HNRNPL.

In terms of biological role, RNA-binding protein that functions as a regulator of alternative splicing for multiple target mRNAs, including PTPRC/CD45 and STAT5A. Required for alternative splicing of PTPRC. This Mus musculus (Mouse) protein is Heterogeneous nuclear ribonucleoprotein L-like (Hnrnpll).